Consider the following 126-residue polypeptide: Glycine cleavage system H protein (126 aa).

The region spanning 22–104 (IAYVGITDYA…YGKGWLIKIK (83 aa)) is the Lipoyl-binding domain. N6-lipoyllysine is present on Lys-63.

Belongs to the GcvH family. In terms of assembly, the glycine cleavage system is composed of four proteins: P, T, L and H. The cofactor is (R)-lipoate.

Functionally, the glycine cleavage system catalyzes the degradation of glycine. The H protein shuttles the methylamine group of glycine from the P protein to the T protein. This is Glycine cleavage system H protein from Phocaeicola vulgatus (strain ATCC 8482 / DSM 1447 / JCM 5826 / CCUG 4940 / NBRC 14291 / NCTC 11154) (Bacteroides vulgatus).